The sequence spans 173 residues: Bifunctional protein PyrR (173 aa).

The PRPP-binding signature appears at 93–105 (IILIDDVLYTGRT).

It belongs to the purine/pyrimidine phosphoribosyltransferase family. PyrR subfamily. In terms of assembly, homodimer and homohexamer; in equilibrium.

The enzyme catalyses UMP + diphosphate = 5-phospho-alpha-D-ribose 1-diphosphate + uracil. Its function is as follows. Regulates transcriptional attenuation of the pyrimidine nucleotide (pyr) operon by binding in a uridine-dependent manner to specific sites on pyr mRNA. This disrupts an antiterminator hairpin in the RNA and favors formation of a downstream transcription terminator, leading to a reduced expression of downstream genes. In terms of biological role, also displays a weak uracil phosphoribosyltransferase activity which is not physiologically significant. The sequence is that of Bifunctional protein PyrR from Streptococcus agalactiae serotype Ia (strain ATCC 27591 / A909 / CDC SS700).